We begin with the raw amino-acid sequence, 379 residues long: Succinyl-diaminopimelate desuccinylase (379 aa).

Zn(2+) is bound at residue His70. Asp72 is a catalytic residue. Asp103 serves as a coordination point for Zn(2+). Catalysis depends on Glu137, which acts as the Proton acceptor. Residues Glu138, Glu166, and His352 each contribute to the Zn(2+) site.

Belongs to the peptidase M20A family. DapE subfamily. Homodimer. It depends on Zn(2+) as a cofactor. Requires Co(2+) as cofactor.

It carries out the reaction N-succinyl-(2S,6S)-2,6-diaminopimelate + H2O = (2S,6S)-2,6-diaminopimelate + succinate. The protein operates within amino-acid biosynthesis; L-lysine biosynthesis via DAP pathway; LL-2,6-diaminopimelate from (S)-tetrahydrodipicolinate (succinylase route): step 3/3. Catalyzes the hydrolysis of N-succinyl-L,L-diaminopimelic acid (SDAP), forming succinate and LL-2,6-diaminopimelate (DAP), an intermediate involved in the bacterial biosynthesis of lysine and meso-diaminopimelic acid, an essential component of bacterial cell walls. The polypeptide is Succinyl-diaminopimelate desuccinylase (Burkholderia cenocepacia (strain ATCC BAA-245 / DSM 16553 / LMG 16656 / NCTC 13227 / J2315 / CF5610) (Burkholderia cepacia (strain J2315))).